A 744-amino-acid polypeptide reads, in one-letter code: Leukocyte immunoglobulin-like receptor subfamily B member 3A (744 aa).

Residues 1 to 24 form the signal peptide; sequence MTFTFTALLCLGLTLGLWIPVLTG. The Extracellular segment spans residues 25–543; sequence SLPKPILRVQ…PPDGLQRYLK (519 aa). Ig-like C2-type domains are found at residues 26–119, 121–221, 223–316, 320–419, and 426–520; these read LPKP…VVTG, YSKP…LVSG, LQKP…VVTG, YHPL…LITG, and FLSV…IVSG. Cystine bridges form between C49-C98, C144-C197, and C246-C295. N79 carries an N-linked (GlcNAc...) asparagine glycan. The N-linked (GlcNAc...) asparagine glycan is linked to N338. An intrachain disulfide couples C343 to C395. The N-linked (GlcNAc...) asparagine glycan is linked to N440. A disulfide bond links C445 and C496. The chain crosses the membrane as a helical span at residues 544-564; the sequence is ALIGVSVAFLLFLFILIFILL. The Cytoplasmic portion of the chain corresponds to 565–744; that stretch reads RRRHQEKFRK…PGAVPKNKKQ (180 aa). A compositionally biased stretch (basic and acidic residues) spans 572 to 584; the sequence is FRKDDEDAQKGKE. 3 disordered regions span residues 572-617, 630-652, and 667-744; these read FRKD…ESLY, ELDTWKPPEGDPQGETYAQVEPS, and EQLN…NKKQ. The ITIM motif 1 motif lies at 615–620; it reads SLYASV. 2 short sequence motifs (ITIM motif) span residues 695 to 700 and 725 to 730; these read VTYAQL and SVYAAL. 2 positions are modified to phosphotyrosine; by LYN: Y697 and Y727.

In terms of assembly, interacts with LYN, PTPN6/SHP-1 and PTPN11/SHP-2. Phosphorylated on tyrosine residues by LYN. Phosphorylation at Tyr-697 and Tyr-727 is important for interaction with PTPN6/SHP-1 and PTPN11/SHP-2.

The protein localises to the cell membrane. May act as receptor for class I MHC antigens. Becomes activated upon coligation with immune receptors, such as FCGR2B and the B-cell receptor. Down-regulates antigen-induced B-cell activation by recruiting phosphatases to its immunoreceptor tyrosine-based inhibitor motifs (ITIM). The chain is Leukocyte immunoglobulin-like receptor subfamily B member 3A from Rattus norvegicus (Rat).